Reading from the N-terminus, the 208-residue chain is MIVIKDAHFLTSSSQLFQCPASLTSEMVVLGRSNVGKSSFINTLLGKNLAKSSATPGKTRLANFFSTTWEDKENALRATFNVIDLPGFGYAKVSKSLKKEWEGFLWELLSVRVSIKLFIHLVDARHLDLEIDKNAKENIQALLRPDQAYLSLFTKFDKLNKNEQHRLFLNAPKPFLINTAHFNALSSKYPTLEIVRQTLLKHLLTNPL.

The region spanning 23-205 (LTSEMVVLGR…RQTLLKHLLT (183 aa)) is the EngB-type G domain. Residues 31–38 (GRSNVGKS), 57–61 (GKTRL), 84–87 (DLPG), 154–157 (TKFD), and 182–184 (FNA) contribute to the GTP site. 2 residues coordinate Mg(2+): S38 and T59.

Belongs to the TRAFAC class TrmE-Era-EngA-EngB-Septin-like GTPase superfamily. EngB GTPase family. Requires Mg(2+) as cofactor.

In terms of biological role, necessary for normal cell division and for the maintenance of normal septation. In Helicobacter pylori (strain ATCC 700392 / 26695) (Campylobacter pylori), this protein is Probable GTP-binding protein EngB.